The chain runs to 365 residues: Beta-parvin (365 aa).

Pro residues predominate over residues 1–12 (MSSAPPRSPTPR). The tract at residues 1 to 52 (MSSAPPRSPTPRAPKMKKDESFLGKLGGTLARKKKTREVTDLQEEGKSAINS) is disordered. S8 bears the Phosphoserine mark. Over residues 37–47 (REVTDLQEEGK) the composition is skewed to basic and acidic residues. 2 Calponin-homology (CH) domains span residues 88 to 195 (KELV…MHFR) and 255 to 362 (NLVK…TKYK).

Belongs to the parvin family. Interacts with ILK, ARHGEF6, PXN (via LD motifs), ACTN2 and actin. Interacts with DYSF. Post-translationally, phosphorylated by ILK. As to expression, expressed predominantly in heart and moderately in spleen, lung and skeletal muscle.

The protein localises to the cell junction. It is found in the focal adhesion. It localises to the cell membrane. The protein resides in the cytoplasm. Its subcellular location is the cytoskeleton. The protein localises to the cell projection. It is found in the lamellipodium. It localises to the myofibril. The protein resides in the sarcomere. Its subcellular location is the z line. Adapter protein that plays a role in integrin signaling via ILK and in activation of the GTPases CDC42 and RAC1 by guanine exchange factors, such as ARHGEF6. Is involved in the reorganization of the actin cytoskeleton and formation of lamellipodia. Plays a role in cell adhesion, cell spreading, establishment or maintenance of cell polarity, and cell migration. In Mus musculus (Mouse), this protein is Beta-parvin (Parvb).